Consider the following 257-residue polypeptide: Hydroxyacylglutathione hydrolase (257 aa).

His-54, His-56, Asp-58, His-59, His-113, Asp-137, and His-175 together coordinate Zn(2+).

The protein belongs to the metallo-beta-lactamase superfamily. Glyoxalase II family. In terms of assembly, monomer. The cofactor is Zn(2+).

The catalysed reaction is an S-(2-hydroxyacyl)glutathione + H2O = a 2-hydroxy carboxylate + glutathione + H(+). It functions in the pathway secondary metabolite metabolism; methylglyoxal degradation; (R)-lactate from methylglyoxal: step 2/2. Functionally, thiolesterase that catalyzes the hydrolysis of S-D-lactoyl-glutathione to form glutathione and D-lactic acid. This Acaryochloris marina (strain MBIC 11017) protein is Hydroxyacylglutathione hydrolase.